A 307-amino-acid polypeptide reads, in one-letter code: Elongation factor Ts (307 aa).

Residues 80 to 83 (TDFV) are involved in Mg(2+) ion dislocation from EF-Tu.

This sequence belongs to the EF-Ts family.

The protein localises to the cytoplasm. Functionally, associates with the EF-Tu.GDP complex and induces the exchange of GDP to GTP. It remains bound to the aminoacyl-tRNA.EF-Tu.GTP complex up to the GTP hydrolysis stage on the ribosome. This is Elongation factor Ts from Clostridium botulinum (strain Loch Maree / Type A3).